The following is a 1302-amino-acid chain: Phosphoribosylformylglycinamidine synthase (1302 aa).

ATP is bound by residues 307 to 318 (GASTGSGGEIRD) and Ala678. Mg(2+) contacts are provided by Glu718, Asn722, and Asp891. A Glutamine amidotransferase type-1 domain is found at 1049-1302 (MAILREQGVN…MFQNARKNIG (254 aa)). The active-site Nucleophile is Cys1142. Catalysis depends on residues His1267 and Glu1269.

The protein in the N-terminal section; belongs to the FGAMS family. In terms of assembly, monomer.

The protein resides in the cytoplasm. It carries out the reaction N(2)-formyl-N(1)-(5-phospho-beta-D-ribosyl)glycinamide + L-glutamine + ATP + H2O = 2-formamido-N(1)-(5-O-phospho-beta-D-ribosyl)acetamidine + L-glutamate + ADP + phosphate + H(+). It functions in the pathway purine metabolism; IMP biosynthesis via de novo pathway; 5-amino-1-(5-phospho-D-ribosyl)imidazole from N(2)-formyl-N(1)-(5-phospho-D-ribosyl)glycinamide: step 1/2. Phosphoribosylformylglycinamidine synthase involved in the purines biosynthetic pathway. Catalyzes the ATP-dependent conversion of formylglycinamide ribonucleotide (FGAR) and glutamine to yield formylglycinamidine ribonucleotide (FGAM) and glutamate. The sequence is that of Phosphoribosylformylglycinamidine synthase from Vibrio parahaemolyticus serotype O3:K6 (strain RIMD 2210633).